We begin with the raw amino-acid sequence, 39 residues long: ORF8a protein (39 aa).

Residues 1–15 form the signal peptide; the sequence is MKLLIVLTCISLCSC. Positions 16-39 constitute an SARS ORF8 Ig-like domain; that stretch reads ICTVVQRCASNKPHVLEDPCKVQH.

This chain is ORF8a protein, found in Homo sapiens (Human).